A 448-amino-acid polypeptide reads, in one-letter code: Dual specificity mitogen-activated protein kinase kinase 5 (448 aa).

The interval 18 to 25 (VIRIKIPN) is interaction with MAPK7. In terms of domain architecture, PB1 spans 18 to 109 (VIRIKIPNSG…EPLQIFPRAC (92 aa)). The interval 64-68 (DEDGD) is interaction with MAP3K2/MAP3K3. The tract at residues 116 to 144 (NIHGLKVNTRAGPSQHTSPVVSDSLPSNS) is disordered. Residues 117–131 (IHGLKVNTRAGPSQH) are interaction with MAPK7. Over residues 126–144 (AGPSQHTSPVVSDSLPSNS) the composition is skewed to polar residues. In terms of domain architecture, Protein kinase spans 166-419 (IRYRDTLGHG…PEELMGHPFI (254 aa)). ATP is bound by residues 172-180 (LGHGNGGTV) and lysine 195. Residue aspartate 283 is the Proton acceptor of the active site. Position 311 is a phosphoserine (serine 311). Threonine 315 is subject to Phosphothreonine.

The protein belongs to the protein kinase superfamily. STE Ser/Thr protein kinase family. MAP kinase kinase subfamily. As to quaternary structure, interacts with PARD6A, MAP3K3 and MAPK7. Forms a complex with SQSTM1 and PRKCZ or PRKCI. Mg(2+) serves as cofactor. Activated by phosphorylation on Ser/Thr by MAP kinase kinase kinases. As to expression, expressed in the liver and brain (at protein level). Expressed in the liver, muscle, testes, lung, kidney, spleen, heart and brain (at protein level).

The protein localises to the cytoplasm. The protein resides in the cytosol. Its subcellular location is the membrane. The enzyme catalyses L-seryl-[protein] + ATP = O-phospho-L-seryl-[protein] + ADP + H(+). It catalyses the reaction L-threonyl-[protein] + ATP = O-phospho-L-threonyl-[protein] + ADP + H(+). The catalysed reaction is L-tyrosyl-[protein] + ATP = O-phospho-L-tyrosyl-[protein] + ADP + H(+). In terms of biological role, acts as a scaffold for the formation of a ternary MAP3K2/MAP3K3-MAP3K5-MAPK7 signaling complex. Activation of this pathway appears to play a critical role in protecting cells from stress-induced apoptosis, neuronal survival and cardiac development and angiogenesis. As part of the MAPK/ERK signaling pathway, acts as a negative regulator of apoptosis in cardiomyocytes via promotion of STUB1/CHIP-mediated ubiquitination and degradation of ICER-type isoforms of CREM. The protein is Dual specificity mitogen-activated protein kinase kinase 5 (Map2k5) of Rattus norvegicus (Rat).